We begin with the raw amino-acid sequence, 755 residues long: Tryptophan 2-monooxygenase (755 aa).

4 residues coordinate FMN: serine 247, glutamate 267, lysine 275, and arginine 295. Arginine 295 lines the substrate pocket.

It belongs to the tryptophan 2-monooxygenase family. The cofactor is FMN.

The catalysed reaction is L-tryptophan + O2 = indole-3-acetamide + CO2 + H2O. It functions in the pathway plant hormone metabolism; auxin biosynthesis. The sequence is that of Tryptophan 2-monooxygenase (tms1) from Agrobacterium tumefaciens (strain Ach5).